A 347-amino-acid chain; its full sequence is Holliday junction branch migration complex subunit RuvB (347 aa).

The interval 4 to 186 is large ATPase domain (RuvB-L); that stretch reads INEYGSERIV…FGMIFEMNFY (183 aa). Residues Leu-25, Arg-26, Gly-67, Lys-70, Thr-71, Thr-72, 133 to 135, Arg-176, Tyr-186, and Arg-223 each bind ATP; that span reads EDF. Thr-71 provides a ligand contact to Mg(2+). Positions 187 to 257 are small ATPAse domain (RuvB-S); the sequence is TQEELKMIIT…IVEEVMRLLG (71 aa). A head domain (RuvB-H) region spans residues 260–347; it reads EFGLDEMDRK…GLFDGFGNIE (88 aa). Residues Arg-315 and Arg-320 each coordinate DNA.

Belongs to the RuvB family. As to quaternary structure, homohexamer. Forms an RuvA(8)-RuvB(12)-Holliday junction (HJ) complex. HJ DNA is sandwiched between 2 RuvA tetramers; dsDNA enters through RuvA and exits via RuvB. An RuvB hexamer assembles on each DNA strand where it exits the tetramer. Each RuvB hexamer is contacted by two RuvA subunits (via domain III) on 2 adjacent RuvB subunits; this complex drives branch migration. In the full resolvosome a probable DNA-RuvA(4)-RuvB(12)-RuvC(2) complex forms which resolves the HJ.

The protein resides in the cytoplasm. It carries out the reaction ATP + H2O = ADP + phosphate + H(+). Functionally, the RuvA-RuvB-RuvC complex processes Holliday junction (HJ) DNA during genetic recombination and DNA repair, while the RuvA-RuvB complex plays an important role in the rescue of blocked DNA replication forks via replication fork reversal (RFR). RuvA specifically binds to HJ cruciform DNA, conferring on it an open structure. The RuvB hexamer acts as an ATP-dependent pump, pulling dsDNA into and through the RuvAB complex. RuvB forms 2 homohexamers on either side of HJ DNA bound by 1 or 2 RuvA tetramers; 4 subunits per hexamer contact DNA at a time. Coordinated motions by a converter formed by DNA-disengaged RuvB subunits stimulates ATP hydrolysis and nucleotide exchange. Immobilization of the converter enables RuvB to convert the ATP-contained energy into a lever motion, pulling 2 nucleotides of DNA out of the RuvA tetramer per ATP hydrolyzed, thus driving DNA branch migration. The RuvB motors rotate together with the DNA substrate, which together with the progressing nucleotide cycle form the mechanistic basis for DNA recombination by continuous HJ branch migration. Branch migration allows RuvC to scan DNA until it finds its consensus sequence, where it cleaves and resolves cruciform DNA. This is Holliday junction branch migration complex subunit RuvB from Fervidobacterium nodosum (strain ATCC 35602 / DSM 5306 / Rt17-B1).